The chain runs to 544 residues: CTP synthase (544 aa).

Residues 1–266 (MTKFIFVTGG…DDLICERFGL (266 aa)) form an amidoligase domain region. S13 contacts CTP. S13 contacts UTP. Residues 14–19 (SLGKGI) and D71 each bind ATP. 2 residues coordinate Mg(2+): D71 and E140. Residues 147-149 (DIE), 187-192 (KTKPTQ), and K223 contribute to the CTP site. Residues 187-192 (KTKPTQ) and K223 each bind UTP. The region spanning 291–543 (TVAMVGKYVE…VKAAKNYSEA (253 aa)) is the Glutamine amidotransferase type-1 domain. G354 contributes to the L-glutamine binding site. The active-site Nucleophile; for glutamine hydrolysis is the C381. Residues 382-385 (LGMQ), E404, and R471 each bind L-glutamine. Catalysis depends on residues H516 and E518.

The protein belongs to the CTP synthase family. As to quaternary structure, homotetramer.

The enzyme catalyses UTP + L-glutamine + ATP + H2O = CTP + L-glutamate + ADP + phosphate + 2 H(+). The catalysed reaction is L-glutamine + H2O = L-glutamate + NH4(+). It carries out the reaction UTP + NH4(+) + ATP = CTP + ADP + phosphate + 2 H(+). It functions in the pathway pyrimidine metabolism; CTP biosynthesis via de novo pathway; CTP from UDP: step 2/2. With respect to regulation, allosterically activated by GTP, when glutamine is the substrate; GTP has no effect on the reaction when ammonia is the substrate. The allosteric effector GTP functions by stabilizing the protein conformation that binds the tetrahedral intermediate(s) formed during glutamine hydrolysis. Inhibited by the product CTP, via allosteric rather than competitive inhibition. Functionally, catalyzes the ATP-dependent amination of UTP to CTP with either L-glutamine or ammonia as the source of nitrogen. Regulates intracellular CTP levels through interactions with the four ribonucleotide triphosphates. This chain is CTP synthase, found in Psychrobacter arcticus (strain DSM 17307 / VKM B-2377 / 273-4).